We begin with the raw amino-acid sequence, 135 residues long: Small ribosomal subunit protein uS11 (135 aa).

It belongs to the universal ribosomal protein uS11 family. As to quaternary structure, part of the 30S ribosomal subunit. Interacts with proteins S7 and S18. Binds to IF-3.

In terms of biological role, located on the platform of the 30S subunit, it bridges several disparate RNA helices of the 16S rRNA. Forms part of the Shine-Dalgarno cleft in the 70S ribosome. The protein is Small ribosomal subunit protein uS11 of Protochlamydia amoebophila (strain UWE25).